Reading from the N-terminus, the 1368-residue chain is DNA-directed RNA polymerase subunit beta (1368 aa).

It belongs to the RNA polymerase beta chain family. As to quaternary structure, the RNAP catalytic core consists of 2 alpha, 1 beta, 1 beta' and 1 omega subunit. When a sigma factor is associated with the core the holoenzyme is formed, which can initiate transcription.

The enzyme catalyses RNA(n) + a ribonucleoside 5'-triphosphate = RNA(n+1) + diphosphate. DNA-dependent RNA polymerase catalyzes the transcription of DNA into RNA using the four ribonucleoside triphosphates as substrates. The chain is DNA-directed RNA polymerase subunit beta from Syntrophotalea carbinolica (strain DSM 2380 / NBRC 103641 / GraBd1) (Pelobacter carbinolicus).